The sequence spans 399 residues: Formate-dependent phosphoribosylglycinamide formyltransferase (399 aa).

Residues 8 to 9 (EL) and E68 contribute to the N(1)-(5-phospho-beta-D-ribosyl)glycinamide site. ATP is bound by residues R100, K141, 146 to 151 (SSGHGQ), 185 to 188 (EALA), and E193. Residues 105 to 308 (VLAHEELGLP…EFALHARAIL (204 aa)) enclose the ATP-grasp domain. Mg(2+)-binding residues include E266 and E279. N(1)-(5-phospho-beta-D-ribosyl)glycinamide is bound by residues D286, K361, and 368–369 (RR).

Belongs to the PurK/PurT family. Homodimer.

The enzyme catalyses N(1)-(5-phospho-beta-D-ribosyl)glycinamide + formate + ATP = N(2)-formyl-N(1)-(5-phospho-beta-D-ribosyl)glycinamide + ADP + phosphate + H(+). It functions in the pathway purine metabolism; IMP biosynthesis via de novo pathway; N(2)-formyl-N(1)-(5-phospho-D-ribosyl)glycinamide from N(1)-(5-phospho-D-ribosyl)glycinamide (formate route): step 1/1. Its function is as follows. Involved in the de novo purine biosynthesis. Catalyzes the transfer of formate to 5-phospho-ribosyl-glycinamide (GAR), producing 5-phospho-ribosyl-N-formylglycinamide (FGAR). Formate is provided by PurU via hydrolysis of 10-formyl-tetrahydrofolate. This Bifidobacterium adolescentis (strain ATCC 15703 / DSM 20083 / NCTC 11814 / E194a) protein is Formate-dependent phosphoribosylglycinamide formyltransferase.